Reading from the N-terminus, the 453-residue chain is tRNA modification GTPase MnmE (453 aa).

(6S)-5-formyl-5,6,7,8-tetrahydrofolate-binding residues include arginine 22, glutamate 79, and lysine 119. Positions 215-376 (GMKVVIAGRP…LKQHLKSLMG (162 aa)) constitute a TrmE-type G domain. Asparagine 225 is a K(+) binding site. Residues 225–230 (NAGKSS), 244–250 (TEIAGTT), 269–272 (DTAG), and 334–337 (NKAD) contribute to the GTP site. Residue serine 229 participates in Mg(2+) binding. Residues threonine 244, isoleucine 246, and threonine 249 each contribute to the K(+) site. Residue threonine 250 participates in Mg(2+) binding. (6S)-5-formyl-5,6,7,8-tetrahydrofolate is bound at residue lysine 453.

It belongs to the TRAFAC class TrmE-Era-EngA-EngB-Septin-like GTPase superfamily. TrmE GTPase family. As to quaternary structure, homodimer. Heterotetramer of two MnmE and two MnmG subunits. It depends on K(+) as a cofactor.

It localises to the cytoplasm. In terms of biological role, exhibits a very high intrinsic GTPase hydrolysis rate. Involved in the addition of a carboxymethylaminomethyl (cmnm) group at the wobble position (U34) of certain tRNAs, forming tRNA-cmnm(5)s(2)U34. The sequence is that of tRNA modification GTPase MnmE from Shewanella baltica (strain OS155 / ATCC BAA-1091).